Consider the following 221-residue polypeptide: Transcriptional regulator GfcR (221 aa).

A disordered region spans residues 35-59 (ASWLVERSQPTDNSQSSSANNPTEA). Polar residues predominate over residues 42–57 (SQPTDNSQSSSANNPT).

This sequence belongs to the purine/pyrimidine phosphoribosyltransferase family. GfcR subfamily.

Functionally, DNA-binding transcriptional regulator that functions as a regulator of central sugar catabolic pathways. The chain is Transcriptional regulator GfcR from Haloquadratum walsbyi (strain DSM 16790 / HBSQ001).